Here is a 423-residue protein sequence, read N- to C-terminus: Histidine--tRNA ligase (423 aa).

It belongs to the class-II aminoacyl-tRNA synthetase family. In terms of assembly, homodimer.

It localises to the cytoplasm. It catalyses the reaction tRNA(His) + L-histidine + ATP = L-histidyl-tRNA(His) + AMP + diphosphate + H(+). The sequence is that of Histidine--tRNA ligase (hisS) from Mycobacterium bovis (strain ATCC BAA-935 / AF2122/97).